We begin with the raw amino-acid sequence, 197 residues long: Syndecan-4 (197 aa).

The first 19 residues, 1-19 (MPLPRAAFLLGLLLAAAAA), serve as a signal peptide directing secretion. The Extracellular segment spans residues 20-147 (ESVRETETMD…SIFERTEVLT (128 aa)). O-linked (Xyl...) (glycosaminoglycan) serine glycans are attached at residues Ser-38, Ser-65, and Ser-67. N-linked (GlcNAc...) asparagine glycosylation is found at Asn-124 and Asn-136. Residues 148 to 168 (ALIAGGAVGLLFAVFLILLLV) traverse the membrane as a helical segment. The Cytoplasmic portion of the chain corresponds to 169 to 197 (YRMKKKDEGSYDLGKKPIYKKAPTNEFYA).

This sequence belongs to the syndecan proteoglycan family. Interacts with SDOS. Post-translationally, O-glycosylated; contains both chondroitin sulfate and heparan sulfate. Ser-38, Ser-65 and Ser-67 can all be modified by either chondroitin sulfate or heparan sulfate, and the protein exists in forms that contain only chondroitin sulfate, only heparan sulfate and both chondroitin sulfate and heparan sulfate.

It is found in the membrane. In terms of biological role, cell surface proteoglycan which regulates exosome biogenesis in concert with SDCBP and PDCD6IP. In Gallus gallus (Chicken), this protein is Syndecan-4 (SDC4).